A 202-amino-acid chain; its full sequence is Holliday junction branch migration complex subunit RuvA (202 aa).

The tract at residues methionine 1–serine 65 is domain I. A domain II region spans residues threonine 66–leucine 144. The interval alanine 145–arginine 155 is flexible linker. The tract at residues arginine 155–arginine 202 is domain III.

It belongs to the RuvA family. As to quaternary structure, homotetramer. Forms an RuvA(8)-RuvB(12)-Holliday junction (HJ) complex. HJ DNA is sandwiched between 2 RuvA tetramers; dsDNA enters through RuvA and exits via RuvB. An RuvB hexamer assembles on each DNA strand where it exits the tetramer. Each RuvB hexamer is contacted by two RuvA subunits (via domain III) on 2 adjacent RuvB subunits; this complex drives branch migration. In the full resolvosome a probable DNA-RuvA(4)-RuvB(12)-RuvC(2) complex forms which resolves the HJ.

The protein localises to the cytoplasm. In terms of biological role, the RuvA-RuvB-RuvC complex processes Holliday junction (HJ) DNA during genetic recombination and DNA repair, while the RuvA-RuvB complex plays an important role in the rescue of blocked DNA replication forks via replication fork reversal (RFR). RuvA specifically binds to HJ cruciform DNA, conferring on it an open structure. The RuvB hexamer acts as an ATP-dependent pump, pulling dsDNA into and through the RuvAB complex. HJ branch migration allows RuvC to scan DNA until it finds its consensus sequence, where it cleaves and resolves the cruciform DNA. This is Holliday junction branch migration complex subunit RuvA from Nitratidesulfovibrio vulgaris (strain DSM 19637 / Miyazaki F) (Desulfovibrio vulgaris).